We begin with the raw amino-acid sequence, 249 residues long: Segregation and condensation protein A (249 aa).

It belongs to the ScpA family. As to quaternary structure, component of a cohesin-like complex composed of ScpA, ScpB and the Smc homodimer, in which ScpA and ScpB bind to the head domain of Smc. The presence of the three proteins is required for the association of the complex with DNA.

It is found in the cytoplasm. In terms of biological role, participates in chromosomal partition during cell division. May act via the formation of a condensin-like complex containing Smc and ScpB that pull DNA away from mid-cell into both cell halves. In Oceanobacillus iheyensis (strain DSM 14371 / CIP 107618 / JCM 11309 / KCTC 3954 / HTE831), this protein is Segregation and condensation protein A.